The sequence spans 139 residues: Ribosomal RNA large subunit methyltransferase H (139 aa).

S-adenosyl-L-methionine-binding positions include L56, G88, and 107-112 (LSLMTF).

Belongs to the RNA methyltransferase RlmH family. In terms of assembly, homodimer.

Its subcellular location is the cytoplasm. It carries out the reaction pseudouridine(1915) in 23S rRNA + S-adenosyl-L-methionine = N(3)-methylpseudouridine(1915) in 23S rRNA + S-adenosyl-L-homocysteine + H(+). Its function is as follows. Specifically methylates the pseudouridine at position 1915 (m3Psi1915) in 23S rRNA. This Coprothermobacter proteolyticus (strain ATCC 35245 / DSM 5265 / OCM 4 / BT) protein is Ribosomal RNA large subunit methyltransferase H.